Here is a 489-residue protein sequence, read N- to C-terminus: Pluviatolide synthase (489 aa).

The chain crosses the membrane as a helical span at residues 6–26; the sequence is SVLGLSSTLIIALAITVIFLL. A heme-binding site is contributed by Cys-432.

Belongs to the cytochrome P450 family. Heme serves as cofactor.

It localises to the membrane. The enzyme catalyses (-)-matairesinol + reduced [NADPH--hemoprotein reductase] + O2 = (-)-pluviatolide + oxidized [NADPH--hemoprotein reductase] + 2 H2O + H(+). Its pathway is aromatic compound metabolism; phenylpropanoid biosynthesis. Cytochrome P450 involved in the biosynthesis of etoposide, a chemotherapeutic compound of the topoisomerase inhibitor family. Catalyzes the conversion of matairesinol to pluviatolide. The sequence is that of Pluviatolide synthase from Podophyllum peltatum (American mandrake).